The following is a 72-amino-acid chain: MSKDDCIEFEGTVSETLPNTTFRIKLENGHEVTAHISGRMRKNYIRILTGDRVKIEMTAYDLTKGRIIYRMK.

Residues 1 to 72 form the S1-like domain; that stretch reads MSKDDCIEFE…TKGRIIYRMK (72 aa).

It belongs to the IF-1 family. Component of the 30S ribosomal translation pre-initiation complex which assembles on the 30S ribosome in the order IF-2 and IF-3, IF-1 and N-formylmethionyl-tRNA(fMet); mRNA recruitment can occur at any time during PIC assembly.

It is found in the cytoplasm. In terms of biological role, one of the essential components for the initiation of protein synthesis. Stabilizes the binding of IF-2 and IF-3 on the 30S subunit to which N-formylmethionyl-tRNA(fMet) subsequently binds. Helps modulate mRNA selection, yielding the 30S pre-initiation complex (PIC). Upon addition of the 50S ribosomal subunit IF-1, IF-2 and IF-3 are released leaving the mature 70S translation initiation complex. This chain is Translation initiation factor IF-1, found in Xylella fastidiosa (strain 9a5c).